The following is a 206-amino-acid chain: Superoxide dismutase [Mn] (206 aa).

Mn(2+) contacts are provided by histidine 27, histidine 82, aspartate 168, and histidine 172.

It belongs to the iron/manganese superoxide dismutase family. In terms of assembly, homodimer. Mn(2+) is required as a cofactor.

It catalyses the reaction 2 superoxide + 2 H(+) = H2O2 + O2. In terms of biological role, destroys superoxide anion radicals which are normally produced within the cells and which are toxic to biological systems. This chain is Superoxide dismutase [Mn] (sodA), found in Escherichia coli O157:H7.